Here is a 213-residue protein sequence, read N- to C-terminus: MRTAYHEQLSELSERLGEMCGLAGIAMERATQALLQADLVLAEQVISDHEKIATLSARAEESAFVLLALQAPVAGDLRAIVSAIQMVADIDRMGALALHVAKIARRRHPQHALPEEVNGYFAEMGRVAVELGNSAQEVVLSHDPEKAAQIREEDDAMDDLHRHLFTVLMDREWKHGVAAAVDVTLLSRFYERFADHAVEVARRVIFQATGAFP.

This sequence belongs to the PhoU family. As to quaternary structure, homodimer.

Its subcellular location is the cytoplasm. In terms of biological role, plays a role in the regulation of phosphate uptake. In this role, it may bind, possibly as a chaperone, to PhoR, PhoP or a PhoR-PhoP complex to promote dephosphorylation of phospho-PhoP, or inhibit formation of the PhoR-PhoP transitory complex. The polypeptide is Phosphate-specific transport system accessory protein PhoU homolog 2 (phoU2) (Mycobacterium bovis (strain ATCC BAA-935 / AF2122/97)).